The chain runs to 307 residues: Ribonuclease Z (307 aa).

The Zn(2+) site is built by His-63, His-65, Asp-67, His-68, His-141, Asp-212, and His-270. Asp-67 acts as the Proton acceptor in catalysis.

It belongs to the RNase Z family. As to quaternary structure, homodimer. The cofactor is Zn(2+).

It catalyses the reaction Endonucleolytic cleavage of RNA, removing extra 3' nucleotides from tRNA precursor, generating 3' termini of tRNAs. A 3'-hydroxy group is left at the tRNA terminus and a 5'-phosphoryl group is left at the trailer molecule.. Its function is as follows. Zinc phosphodiesterase, which displays some tRNA 3'-processing endonuclease activity. Probably involved in tRNA maturation, by removing a 3'-trailer from precursor tRNA. The polypeptide is Ribonuclease Z (Bacillus cereus (strain ATCC 10987 / NRS 248)).